A 202-amino-acid polypeptide reads, in one-letter code: Holliday junction branch migration complex subunit RuvA (202 aa).

Residues 1 to 63 (MIAFLSGRVV…EDSLTLFGFA (63 aa)) are domain I. The tract at residues 64 to 142 (DDDERDTFER…EPGGDTAATP (79 aa)) is domain II. Residues 143 to 152 (EQSAAAAPRN) are flexible linker. The domain III stretch occupies residues 152-202 (NWRAQVVSGLVNLGWSTREAEAAADAVAAEAGEQPDVAALLRSALRRLSRA).

The protein belongs to the RuvA family. In terms of assembly, homotetramer. Forms an RuvA(8)-RuvB(12)-Holliday junction (HJ) complex. HJ DNA is sandwiched between 2 RuvA tetramers; dsDNA enters through RuvA and exits via RuvB. An RuvB hexamer assembles on each DNA strand where it exits the tetramer. Each RuvB hexamer is contacted by two RuvA subunits (via domain III) on 2 adjacent RuvB subunits; this complex drives branch migration. In the full resolvosome a probable DNA-RuvA(4)-RuvB(12)-RuvC(2) complex forms which resolves the HJ.

The protein resides in the cytoplasm. Its function is as follows. The RuvA-RuvB-RuvC complex processes Holliday junction (HJ) DNA during genetic recombination and DNA repair, while the RuvA-RuvB complex plays an important role in the rescue of blocked DNA replication forks via replication fork reversal (RFR). RuvA specifically binds to HJ cruciform DNA, conferring on it an open structure. The RuvB hexamer acts as an ATP-dependent pump, pulling dsDNA into and through the RuvAB complex. HJ branch migration allows RuvC to scan DNA until it finds its consensus sequence, where it cleaves and resolves the cruciform DNA. The sequence is that of Holliday junction branch migration complex subunit RuvA from Thermobifida fusca (strain YX).